Consider the following 356-residue polypeptide: Dynein regulatory complex protein 10 (356 aa).

Residues 126 to 167 (SNREFFEEVRDREERAVAEQEQLKQKLKLQRVELQKAAGTIQ) are a coiled coil. Residues 173–209 (ARGEVSEVQSSTQQSRAAIEGSARAQSEADKSSFQSD) form a disordered region. The span at 178 to 187 (SEVQSSTQQS) shows a compositional bias: low complexity. The stretch at 197-287 (AQSEADKSSF…LRQLQEYNSG (91 aa)) forms a coiled coil. The region spanning 319–348 (QNHAARVIQSYWRGFKKAREAAKKKAKKLE) is the IQ domain.

This sequence belongs to the DRC10 family. In terms of assembly, component of the nexin-dynein regulatory complex (N-DRC).

It localises to the cytoplasm. It is found in the cytoskeleton. The protein localises to the flagellum axoneme. Its function is as follows. Component of the nexin-dynein regulatory complex (N-DRC), a key regulator of ciliary/flagellar motility which maintains the alignment and integrity of the distal axoneme and regulates microtubule sliding in motile axonemes. In Chlamydomonas reinhardtii (Chlamydomonas smithii), this protein is Dynein regulatory complex protein 10.